A 225-amino-acid chain; its full sequence is Cold-regulated 413 inner membrane protein 1, chloroplastic (225 aa).

A chloroplast-targeting transit peptide spans 1-76 (MASLCLSSSR…RKRGSSVVCY (76 aa)). Position 77 (alanine 77) is a topological domain, stromal. The helical transmembrane segment at 78-98 (APISANSLQWISTISCLALML) threads the bilayer. The Chloroplast intermembrane portion of the chain corresponds to 99–102 (ARGT). Residues 103–123 (GIHKSVVVPLFALHAPSSIVA) form a helical membrane-spanning segment. The Stromal portion of the chain corresponds to 124-128 (WIKGE). Residues 129–149 (YGVWAAFLALIARLFFTFPGE) form a helical membrane-spanning segment. Residues 150–151 (LE) lie on the Chloroplast intermembrane side of the membrane. Residues 152 to 172 (LPFIALLLVIVAPYQVMNIRG) form a helical membrane-spanning segment. Residues 173 to 175 (KQE) are Stromal-facing. A helical transmembrane segment spans residues 176 to 196 (GAIIAIAISGFLAFQHFSRAG). The Chloroplast intermembrane portion of the chain corresponds to 197 to 204 (SLEKAYEK). Residues 205 to 225 (GSVLATVAIIGVTVVSLLLLL) form a helical membrane-spanning segment.

Belongs to the Cold-regulated 413 protein family.

It localises to the plastid. The protein resides in the chloroplast inner membrane. This Arabidopsis thaliana (Mouse-ear cress) protein is Cold-regulated 413 inner membrane protein 1, chloroplastic (COR413IM1).